The chain runs to 201 residues: Heat shock protein beta-1 (201 aa).

Arg12 is subject to Omega-N-methylarginine. Ser15 is subject to Phosphoserine; by MAPKAPK2 and MAPKAPK3. Phosphoserine is present on Ser27. Residues 68-201 (AYNRALSRQL…AGKSEQPENK (134 aa)) form an interaction with TGFB1I1 region. The 109-residue stretch at 72–180 (ALSRQLSSGV…QSAEITIPVT (109 aa)) folds into the sHSP domain. 2 positions are modified to phosphoserine; by MAPKAPK2, MAPKAPK3 and MAPKAPK5: Ser74 and Ser78. Phosphoserine is present on residues Ser79, Ser82, and Ser94. Lys119 is modified (N6-acetyllysine). Thr170 is modified (phosphothreonine). A phosphoserine mark is found at Ser172 and Ser195.

This sequence belongs to the small heat shock protein (HSP20) family. Homooligomer. Homodimer; becomes monomeric upon activation. Heterooligomer; with HSPB6. Associates with alpha- and beta-tubulin. Interacts with TGFB1I1. Interacts with CRYAB. Interacts with HSPB8. Interacts with HSPBAP1. In terms of processing, phosphorylated upon exposure to protein kinase C activators and heat shock. Phosphorylation by MAPKAPK2 and MAPKAPK3 in response to stress dissociates HSPB1 from large small heat-shock protein (sHsps) oligomers and impairs its chaperone activity and ability to protect against oxidative stress effectively. Phosphorylation by MAPKAPK5 in response to PKA stimulation induces F-actin rearrangement.

The protein resides in the cytoplasm. It is found in the nucleus. It localises to the cytoskeleton. The protein localises to the spindle. Functionally, small heat shock protein which functions as a molecular chaperone probably maintaining denatured proteins in a folding-competent state. Plays a role in stress resistance and actin organization. Through its molecular chaperone activity may regulate numerous biological processes including the phosphorylation and the axonal transport of neurofilament proteins. The sequence is that of Heat shock protein beta-1 (HSPB1) from Bos taurus (Bovine).